We begin with the raw amino-acid sequence, 60 residues long: UPF0181 protein PMI1604 (60 aa).

The protein belongs to the UPF0181 family.

The polypeptide is UPF0181 protein PMI1604 (Proteus mirabilis (strain HI4320)).